The chain runs to 747 residues: Elongation factor G, mitochondrial (747 aa).

Residues 1–16 (MSLIMRVLNGNLSLRL) constitute a mitochondrion transit peptide. Residues 42-319 (ERIRNIGISA…AIIDYLPNPG (278 aa)) form the tr-type G domain. GTP contacts are provided by residues 51–58 (AHIDSGKT), 118–122 (DTPGH), and 172–175 (NKLD).

The protein belongs to the TRAFAC class translation factor GTPase superfamily. Classic translation factor GTPase family. EF-G/EF-2 subfamily.

The protein localises to the mitochondrion. The protein operates within protein biosynthesis; polypeptide chain elongation. Mitochondrial GTPase that catalyzes the GTP-dependent ribosomal translocation step during translation elongation. During this step, the ribosome changes from the pre-translocational (PRE) to the post-translocational (POST) state as the newly formed A-site-bound peptidyl-tRNA and P-site-bound deacylated tRNA move to the P and E sites, respectively. Catalyzes the coordinated movement of the two tRNA molecules, the mRNA and conformational changes in the ribosome. Essential during development as it acts as a retrograde signal from mitochondria to the nucleus to slow down cell proliferation if mitochondrial energy output is low. The chain is Elongation factor G, mitochondrial from Drosophila grimshawi (Hawaiian fruit fly).